The following is a 321-amino-acid chain: Sex-lethal homolog (321 aa).

2 consecutive RRM domains span residues 78-156 (TNLI…FARP) and 164-244 (TNLY…VAEE).

In terms of tissue distribution, expressed in gonads and somatic tissues of both sexes. In the ovary, expressed in the last egg chamber of each ovariole. Highly expressed in nurse cells with low expression found in oocytes. Highly expressed in testis with lower expression in testis sheath and vas deferentia.

It localises to the nucleus. Its function is as follows. Unknown; apparently not involved in somatic sex determination. This is Sex-lethal homolog (SXL) from Megaselia scalaris (Humpbacked fly).